The primary structure comprises 183 residues: Mitochondrial import inner membrane translocase subunit tim17 (183 aa).

3 consecutive transmembrane segments (helical) span residues 13 to 33, 57 to 77, and 107 to 127; these read AGGAFAIGYVLMGVVNIGLGF, GGNFAIWGSLFSGFDCTLSYI, and VQAAAFGGIFIGIIEAFQHMM. The segment covering 131–141 has biased composition (polar residues); the sequence is MQAQQEEMTQQ. Positions 131 to 183 are disordered; that stretch reads MQAQQEEMTQQHLEERKRYEEERKQREGERKKLNENGKSKKNKQQQNGENDLD. Over residues 142–168 the composition is skewed to basic and acidic residues; it reads HLEERKRYEEERKQREGERKKLNENGK. The segment covering 174–183 has biased composition (low complexity); sequence QQQNGENDLD.

This sequence belongs to the Tim17/Tim22/Tim23 family.

It localises to the mitochondrion inner membrane. Its function is as follows. May be involved in the translocation of transit peptide-containing proteins across the mitochondrial inner membrane. This Dictyostelium discoideum (Social amoeba) protein is Mitochondrial import inner membrane translocase subunit tim17 (timm17).